The sequence spans 606 residues: MQKMPSQILNDGSSVSLNSASMNMANTPNSITVKTAYNGQIIITTINKNISYEELCYEIRNICRFPLDQPFTIKWVDEENDPCTISTKMELDEAIRLYEMNFDSQLVIHVFPNVPQAPGLSCDGEDRSIYRRGARRWRKLYRVNGHIFQAKRFNRRAFCAYCQDRIWGLGRQGFKCIQCKLLVHKKCHKLVQKHCTDQPEPLVKERAEESSDPIPVPLPPLPYEAMSGGAEACETHDHAHIVAPPPPEDPLEPGTQRQYSLNDFELIRVIGRGSYAKVLMVELRRTRRIYAMKVIKKALVTDDEDIDWVQTEKHVFETASNHPFLVGLHSCFQTPSRLFFVIEFVRGGDLMYHMQRQRRLPEEHARFYAAEISLALNFLHEKGIIYRDLKLDNVLLDHEGHIKLTDYGMCKEGIRPGDTTSTFCGTPNYIAPEILRGEDYGFSVDWWALGVLLYEMLAGRSPFDLAGASENPDQNTEDYLFQVILEKTIRIPRSLSVRAASVLKGFLNKNPADRLGCHRESAFMDIVSHPFFKNMDWELLERKQVTPPFKPRLDSDRDLANFPPEFTGEAVQLTPDDDHVIDNIDQSEFEGFEYVNPLLMSLEDCV.

The 84-residue stretch at 30 to 113 folds into the PB1 domain; it reads SITVKTAYNG…SQLVIHVFPN (84 aa). A Phorbol-ester/DAG-type zinc finger spans residues 145-195; the sequence is GHIFQAKRFNRRAFCAYCQDRIWGLGRQGFKCIQCKLLVHKKCHKLVQKHC. A Protein kinase domain is found at 264–532; sequence FELIRVIGRG…FMDIVSHPFF (269 aa). ATP contacts are provided by residues 270 to 278 and K293; that span reads IGRGSYAKV. Catalysis depends on D388, which acts as the Proton acceptor. The AGC-kinase C-terminal domain maps to 533 to 604; sequence KNMDWELLER…VNPLLMSLED (72 aa).

The protein belongs to the protein kinase superfamily. AGC Ser/Thr protein kinase family. PKC subfamily. In terms of assembly, interacts with baz; the interaction is required for apical localization of aPKC in neuroblasts and epithelial cells. Interacts with Dap160; the interaction promotes aPKC apical localization and kinase activity. Interacts with and phosphorylates l(2)gl and yrt. Interacts with crb and ref(2)P. Forms a complex with baz, fz and Patj. As to expression, expressed in the testis. In spermatid cysts, localizes near the tips of spermatid flagellar axonemes (at protein level). Detectable in freshly laid eggs before onset of zygotic transcription so is deposited in the egg during oogenesis. At the cellular blastoderm stage, present in all cells except the pole cells. During gastrulation, strongly expressed in tissues undergoing morphogenetic movements such as invaginating mesoderm, proctodeum and cephalic furrow. Strongly expressed in neuroblasts.

The protein localises to the cytoplasm. It localises to the cell cortex. Its subcellular location is the apicolateral cell membrane. The catalysed reaction is L-seryl-[protein] + ATP = O-phospho-L-seryl-[protein] + ADP + H(+). The enzyme catalyses L-threonyl-[protein] + ATP = O-phospho-L-threonyl-[protein] + ADP + H(+). Serine/threonine protein kinase which is required for apico-basal cell polarity in the germ line as well as in epithelial and neural precursor cells, for epithelial planar cell polarity and for cell proliferation. During oocyte development, required for the posterior translocation of oocyte specification factors and for the posterior establishment of the microtubule organizing center within the presumptive oocyte. Phosphorylates l(2)gl which restricts l(2)gl activity to the oocyte posterior and regulates posterior enrichment of par-1, leading to establishment of correct oocyte polarity. Essential for apical localization of l(2)gl and par-6 in neuroblasts and for exclusion of mira from the apical cortex. Phosphorylates baz which is required for targeting of baz to the postsynaptic region where it is involved in actin organization, and for apical exclusion of baz which is necessary for establishment of the apical/lateral border in epithelial cells. Phosphorylates yrt which prevents its premature apical localization and is necessary for correct epithelial cell polarization. Required for the establishment of mitotic spindle orientation during symmetric division of epithelial cells and for apical exclusion of raps/Pins. Involved in symmetric adherens junction positioning during embryogenesis. Required for polarization of the spermatid cyst which is necessary for sperm differentiation. Required for stimulation of the Toll signaling pathway which activates Dif and dl and plays a role in innate immunity. Plays a role in memory enhancement. In Drosophila melanogaster (Fruit fly), this protein is Atypical protein kinase C.